The sequence spans 58 residues: Small ribosomal subunit protein bS21 (58 aa).

Residues 37-58 (FYEKPSVKRKRKSEAARKRKKF) are disordered. Positions 43-58 (VKRKRKSEAARKRKKF) are enriched in basic residues.

Belongs to the bacterial ribosomal protein bS21 family.

The sequence is that of Small ribosomal subunit protein bS21 from Streptococcus sanguinis (strain SK36).